The following is a 346-amino-acid chain: Phosphate acyltransferase (346 aa).

Belongs to the PlsX family. Homodimer. Probably interacts with PlsY.

It localises to the cytoplasm. It catalyses the reaction a fatty acyl-[ACP] + phosphate = an acyl phosphate + holo-[ACP]. It functions in the pathway lipid metabolism; phospholipid metabolism. In terms of biological role, catalyzes the reversible formation of acyl-phosphate (acyl-PO(4)) from acyl-[acyl-carrier-protein] (acyl-ACP). This enzyme utilizes acyl-ACP as fatty acyl donor, but not acyl-CoA. This Brucella suis biovar 1 (strain 1330) protein is Phosphate acyltransferase.